Consider the following 84-residue polypeptide: Large ribosomal subunit protein bL27 (84 aa).

Belongs to the bacterial ribosomal protein bL27 family.

This is Large ribosomal subunit protein bL27 from Campylobacter lari (strain RM2100 / D67 / ATCC BAA-1060).